Reading from the N-terminus, the 229-residue chain is Casparian strip membrane protein 1 (229 aa).

Residues 1–67 (MSTSEAGAAA…FRRADRGSRC (67 aa)) are Cytoplasmic-facing. A helical transmembrane segment spans residues 68 to 88 (VALLDFVLRVAAFGPALAAAI). Topologically, residues 89–115 (ATGTSDETLSVFTQFFQFHARFDDFPA) are extracellular. A helical membrane pass occupies residues 116–136 (LLFFMVANAIAAGYLVLSLPF). The Cytoplasmic segment spans residues 137–157 (SAVIVLRPQAIGLRHLLLVCD). A helical membrane pass occupies residues 158 to 178 (MIIAALLTAAAAAAAAIVDLA). The Extracellular segment spans residues 179-205 (HSGNLRANWVPICMQFHGFCQRTSGAV). A helical membrane pass occupies residues 206–226 (VGSFLAVLVLLFLVILAAFAI). Topologically, residues 227–229 (RKR) are cytoplasmic.

This sequence belongs to the Casparian strip membrane proteins (CASP) family. Homodimer and heterodimers.

The protein resides in the cell membrane. Regulates membrane-cell wall junctions and localized cell wall deposition. Required for establishment of the Casparian strip membrane domain (CSD) and the subsequent formation of Casparian strips, a cell wall modification of the root endodermis that determines an apoplastic barrier between the intraorganismal apoplasm and the extraorganismal apoplasm and prevents lateral diffusion. The sequence is that of Casparian strip membrane protein 1 from Sorghum bicolor (Sorghum).